A 134-amino-acid chain; its full sequence is uncharacterized protein (134 aa).

A signal peptide spans Met-1–Ala-16.

This is an uncharacterized protein from Oryza sativa subsp. indica (Rice).